A 28-amino-acid chain; its full sequence is 50 kDa venom protease (28 aa).

This sequence belongs to the venom metalloproteinase (M12B) family. Zn(2+) is required as a cofactor. As to expression, expressed by the venom gland.

Its subcellular location is the secreted. This chain is 50 kDa venom protease, found in Proatheris superciliaris (Lowland swamp viper).